The chain runs to 459 residues: MDEQMNKKYLANKLFETQFALEDLREIVRQSLPTGMSNDQSEHYDEIVSGLGGLLEDLGKKNGQTQPVKIVGDLMCRTREEEFINIQPIQAGGRLTPEARKAVIAYGDGYSTCDNCRKPFRLDKIEKPSISTFHTDLAEFVGMDQARVVPGARRGFQAVASSIIEKGDTVVVSTFAHYTEFLAVEGAGGIVREAPVNEHNILTAESVAHKIDEVKRETGKLPALIMIDHFDYLFCNEHDIYGIGKVAQEYGIPFLYNGAYTVGIMPVNGQKIGADFVVGSGHKSMASAAPSGVLATTEEWADKIFRTTQMVGDVTGRKFGIKEVEFLGCTLMGAPLLSMMASFPHVKERTKHWDEEVKKSNYFINEFLRIEGNEVLSEFPRKHALSKVDTTGSFDKVAKTHKRKGYFFSDELKKRGIAGEFPGATRSWKMSTYGLSWDQIHYLSNSFIEIADKYDININ.

Residues 152–153, Asn-257, and 280–282 contribute to the pyridoxal 5'-phosphate site; these read AR and SGH. At Lys-283 the chain carries N6-(pyridoxal phosphate)lysine.

It belongs to the SepCysS family. Homodimer. Interacts with SepRS. The cofactor is pyridoxal 5'-phosphate.

It carries out the reaction O-phospho-L-seryl-tRNA(Cys) + hydrogen sulfide + H(+) = L-cysteinyl-tRNA(Cys) + phosphate. Converts O-phospho-L-seryl-tRNA(Cys) (Sep-tRNA(Cys)) to L-cysteinyl-tRNA(Cys) (Cys-tRNA(Cys)). In Methanococcoides burtonii (strain DSM 6242 / NBRC 107633 / OCM 468 / ACE-M), this protein is O-phospho-L-seryl-tRNA:Cys-tRNA synthase 1.